A 234-amino-acid polypeptide reads, in one-letter code: Enolase-phosphatase E1 (234 aa).

A disordered region spans residues 212 to 234 (RPGNYPQPQHSHFKISSFEGLNP).

It belongs to the HAD-like hydrolase superfamily. MasA/MtnC family. In terms of assembly, monomer. Mg(2+) serves as cofactor.

It carries out the reaction 5-methylsulfanyl-2,3-dioxopentyl phosphate + H2O = 1,2-dihydroxy-5-(methylsulfanyl)pent-1-en-3-one + phosphate. It functions in the pathway amino-acid biosynthesis; L-methionine biosynthesis via salvage pathway; L-methionine from S-methyl-5-thio-alpha-D-ribose 1-phosphate: step 3/6. Its pathway is amino-acid biosynthesis; L-methionine biosynthesis via salvage pathway; L-methionine from S-methyl-5-thio-alpha-D-ribose 1-phosphate: step 4/6. In terms of biological role, bifunctional enzyme that catalyzes the enolization of 2,3-diketo-5-methylthiopentyl-1-phosphate (DK-MTP-1-P) into the intermediate 2-hydroxy-3-keto-5-methylthiopentenyl-1-phosphate (HK-MTPenyl-1-P), which is then dephosphorylated to form the acireductone 1,2-dihydroxy-3-keto-5-methylthiopentene (DHK-MTPene). This is Enolase-phosphatase E1 from Leptospira interrogans serogroup Icterohaemorrhagiae serovar copenhageni (strain Fiocruz L1-130).